The sequence spans 441 residues: ATP-dependent protease ATPase subunit HslU (441 aa).

Residues I18, 60-65, D254, E319, and R391 each bind ATP; that span reads GVGKTE.

It belongs to the ClpX chaperone family. HslU subfamily. As to quaternary structure, a double ring-shaped homohexamer of HslV is capped on each side by a ring-shaped HslU homohexamer. The assembly of the HslU/HslV complex is dependent on binding of ATP.

It localises to the cytoplasm. ATPase subunit of a proteasome-like degradation complex; this subunit has chaperone activity. The binding of ATP and its subsequent hydrolysis by HslU are essential for unfolding of protein substrates subsequently hydrolyzed by HslV. HslU recognizes the N-terminal part of its protein substrates and unfolds these before they are guided to HslV for hydrolysis. The protein is ATP-dependent protease ATPase subunit HslU of Shewanella denitrificans (strain OS217 / ATCC BAA-1090 / DSM 15013).